A 139-amino-acid chain; its full sequence is Small ribosomal subunit protein uS19 (139 aa).

The protein belongs to the universal ribosomal protein uS19 family.

Functionally, protein S19 forms a complex with S13 that binds strongly to the 16S ribosomal RNA. The sequence is that of Small ribosomal subunit protein uS19 from Ignicoccus hospitalis (strain KIN4/I / DSM 18386 / JCM 14125).